A 142-amino-acid polypeptide reads, in one-letter code: Universal stress protein D (142 aa).

This sequence belongs to the universal stress protein A family.

The protein localises to the cytoplasm. Required for resistance to DNA-damaging agents. The protein is Universal stress protein D (uspD) of Escherichia coli O157:H7.